Consider the following 426-residue polypeptide: Ammonium transporter Rh type A (426 aa).

Residues 1-4 are Cytoplasmic-facing; sequence MRFK. A helical transmembrane segment spans residues 5 to 25; that stretch reads FPLMAIGLEVVMIVLFALFVQ. At 26 to 54 the chain is on the extracellular side; it reads YETSVNTSRNPNETESAAMDVEKTMESYP. N-linked (GlcNAc...) asparagine glycosylation is found at asparagine 31 and asparagine 37. A helical membrane pass occupies residues 55–75; the sequence is FFQDVHIMVFAGFGFLMTFLW. The Cytoplasmic segment spans residues 76–78; sequence KYG. A helical membrane pass occupies residues 79–99; sequence FSGVGINLLIAALGLQWGTII. Residues 100–124 lie on the Extracellular side of the membrane; sequence QGIFRSHGQKFLIEMKNMIHADFST. The next 2 helical transmembrane spans lie at 125–145 and 146–166; these read VTVL…QMLI and MTIL…KILW. The Extracellular portion of the chain corresponds to 167–170; it reads ASDT. The chain crosses the membrane as a helical span at residues 171–191; the sequence is GESMTIHAFGAYFGLAVAGIL. Residues 192–210 are Cytoplasmic-facing; the sequence is YRSGLKEKHSNEESVYHSD. A helical membrane pass occupies residues 211-231; it reads LFAMIGSLFLWIFWPSFNSAT. Residues 232–241 are Extracellular-facing; that stretch reads ADEAKKQYRA. The chain crosses the membrane as a helical span at residues 242 to 262; that stretch reads IVNTYFSLAASVVTAYACSSL. The Cytoplasmic segment spans residues 263 to 270; that stretch reads LESRGKLN. The helical transmembrane segment at 271 to 288 threads the bilayer; the sequence is MVHIQNATLAGGVAVGTC. The Extracellular portion of the chain corresponds to 289–292; it reads ADME. Residues 293 to 313 form a helical membrane-spanning segment; the sequence is IPPYYAMIIGSIAGAVSVFGF. Residues 314 to 331 are Cytoplasmic-facing; that stretch reads KFLTPLFTTKLRIHDTCG. Residues 332–352 traverse the membrane as a helical segment; it reads VHNLHGLPGVIGGLAGIITVA. The Extracellular segment spans residues 353–371; it reads LEESDSTKTVSQAAALGSS. A helical transmembrane segment spans residues 372–392; the sequence is IATALVGGLITGAILKIPFWA. Residues 393–426 lie on the Cytoplasmic side of the membrane; it reads QPPDEDCYDDSVYWEVPERKEYDNHFHELLSTLH.

It belongs to the ammonium transporter (TC 2.A.49) family. Rh subfamily. As to quaternary structure, homodimer. Heterotrimer; a RHCE monomer interacts with a RHAG homodimer. Component of the ankyrin-1 complex in the erythrocyte, composed of ANK1, RHCE, RHAG, SLC4A1, EPB42, GYPA, GYPB and AQP1. Interacts with GYPB (via the N-terminal); this interaction bridges the (RHAG)2(RHCE) heterotrimer with the SLC4A1 Band 3 I dimer complexed with GYPA. Post-translationally, glycosylated.

It localises to the membrane. It catalyses the reaction methylamine(out) = methylamine(in). It carries out the reaction NH4(+)(in) = NH4(+)(out). The catalysed reaction is CO2(out) = CO2(in). Its function is as follows. Component of the ankyrin-1 complex, a multiprotein complex involved in the stability and shape of the erythrocyte membrane. Heterotrimer with RHCE (RHAG)2(RHCE), that transports ammonium and its related derivative methylammonium, in both neutral and ionic forms, across the erythrocyte membrane. The transport of NH4(+) is electrogenic and masks the NH3 transport. Also, may act as a CO2 channel. Moreover in erythrocyte, regulates RHD membrane expression and is associated with rhesus blood group antigen expression. The protein is Ammonium transporter Rh type A of Bos taurus (Bovine).